Reading from the N-terminus, the 390-residue chain is MKIQVLVLVCLHLSEGVERIILKKGKSIRQVMEERGVLETFLRNHPKVDPAAKYLFNNDAVAYEPFTNYLDSYYFGEISIGTPPQNFLILFDTGSSNLWVPSTYCQSQACSNHNRFNPSRSSTYQSSEQTYTLAYGFGSLTVLLGYDTVTVQNIVIHNQLFGMSENEPNYPFYYSYFDGILGMAYSNLAVDNGPTVLQNMMQQGQLTQPIFSFYFSPQPTYEYGGELILGGVDTQFYSGEIVWAPVTREMYWQVAIDEFLIGNQATGLCSQGCQGIVDTGTFPLTVPQQYLDSFVKATGAQQDQSGNFVVNCNSIQSMPTITFVISGSPLPLPPSTYVLNNNGYCTLGIEVTYLPSPNGQPLWILGDVFLREYYTVFDMAANRVGFALSS.

The signal sequence occupies residues methionine 1–glycine 16. A propeptide spans valine 17–aspartate 59 (activation peptide). The Peptidase A1 domain occupies tyrosine 74 to alanine 387. Aspartate 92 is an active-site residue. Disulfide bonds link cysteine 105-cysteine 110 and cysteine 269-cysteine 273. Residue aspartate 278 is part of the active site. Cysteine 312 and cysteine 345 are joined by a disulfide.

This sequence belongs to the peptidase A1 family.

The protein localises to the secreted. It catalyses the reaction Degradation of gelatin, little activity on hemoglobin. Specificity on B chain of insulin more restricted than that of pepsin A. Does not cleave 1-Phe-|-Val-2, 4-Gln-|-His-5 or 23-Gly-|-Phe-24.. Functionally, hydrolyzes various peptides including beta-endorphin, insulin B chain, dynorphin A, and neurokinin A, with high specificity for the cleavage of the Phe-Xaa bonds. The chain is Pepsin B (PGB) from Canis lupus familiaris (Dog).